Consider the following 370-residue polypeptide: Ubiquitin-binding protein Rv1468c (370 aa).

Positions 1–72 (MSFVVANTEF…QVLSAQAAAF (72 aa)) are UBA. In terms of domain architecture, PE spans 1–93 (MSFVVANTEF…AQAYAAAEAT (93 aa)).

It belongs to the mycobacterial PE family. PGRS subfamily. As to quaternary structure, interacts directly with host polyubiquitin in a UBA-dependent manner.

Its subcellular location is the secreted. It is found in the cell wall. It localises to the cell surface. Its function is as follows. Mediates direct binding of host ubiquitin (Ub) to the mycobacterial surface, which triggers host xenophagy. Interaction between Rv1468c and ubiquitin recruits autophagy receptor p62 to deliver mycobacteria into LC3-associated autophagosomes. It could be a viable evolutionary strategy adopted by M.tuberculosis to maintain long-term intracellular survival through self-controlling its intracellular bacterial loads to avoid excessive host inflammatory immune responses. The protein is Ubiquitin-binding protein Rv1468c of Mycobacterium tuberculosis (strain ATCC 25618 / H37Rv).